A 297-amino-acid chain; its full sequence is GTP cyclohydrolase FolE2 (297 aa).

Disordered regions lie at residues methionine 1–aspartate 21 and isoleucine 180–proline 207.

This sequence belongs to the GTP cyclohydrolase IV family.

The catalysed reaction is GTP + H2O = 7,8-dihydroneopterin 3'-triphosphate + formate + H(+). It participates in cofactor biosynthesis; 7,8-dihydroneopterin triphosphate biosynthesis; 7,8-dihydroneopterin triphosphate from GTP: step 1/1. In terms of biological role, converts GTP to 7,8-dihydroneopterin triphosphate. The polypeptide is GTP cyclohydrolase FolE2 (Methylibium petroleiphilum (strain ATCC BAA-1232 / LMG 22953 / PM1)).